Here is a 209-residue protein sequence, read N- to C-terminus: Imidazoleglycerol-phosphate dehydratase (209 aa).

It belongs to the imidazoleglycerol-phosphate dehydratase family.

It localises to the cytoplasm. The catalysed reaction is D-erythro-1-(imidazol-4-yl)glycerol 3-phosphate = 3-(imidazol-4-yl)-2-oxopropyl phosphate + H2O. It participates in amino-acid biosynthesis; L-histidine biosynthesis; L-histidine from 5-phospho-alpha-D-ribose 1-diphosphate: step 6/9. The sequence is that of Imidazoleglycerol-phosphate dehydratase from Microcystis aeruginosa (strain NIES-843 / IAM M-2473).